The chain runs to 434 residues: Pre-mRNA-splicing factor PRP46 (434 aa).

WD repeat units follow at residues 120–160, 163–202, 205–244, 247–288, 290–329, 331–369, and 380–419; these read GHTG…LKIT, GHVM…AIRD, GHLS…EIMV, GHKS…KVLT, HSRN…TNFQ, QNTG…KYQS, and ESER…TEDT.

It belongs to the WD repeat PRL1/PRL2 family. In terms of assembly, associated with the spliceosome.

It is found in the cytoplasm. The protein localises to the nucleus. Functionally, involved in pre-mRNA splicing and required for cell cycle progression at G2/M. This is Pre-mRNA-splicing factor PRP46 (PRP46) from Kluyveromyces lactis (strain ATCC 8585 / CBS 2359 / DSM 70799 / NBRC 1267 / NRRL Y-1140 / WM37) (Yeast).